The primary structure comprises 600 residues: Glutamine--fructose-6-phosphate aminotransferase [isomerizing] (600 aa).

Cys2 serves as the catalytic Nucleophile; for GATase activity. Residues 2–217 form the Glutamine amidotransferase type-2 domain; the sequence is CGIVGFIGEQ…DKEIVIVTKE (216 aa). SIS domains follow at residues 283 to 422 and 452 to 590; these read IRNA…AKGE and LAKQ…VDKP. The active-site For Fru-6P isomerization activity is the Lys595.

In terms of assembly, homodimer.

It is found in the cytoplasm. The enzyme catalyses D-fructose 6-phosphate + L-glutamine = D-glucosamine 6-phosphate + L-glutamate. Its function is as follows. Catalyzes the first step in hexosamine metabolism, converting fructose-6P into glucosamine-6P using glutamine as a nitrogen source. This chain is Glutamine--fructose-6-phosphate aminotransferase [isomerizing], found in Bacillus cereus (strain ATCC 10987 / NRS 248).